A 229-amino-acid chain; its full sequence is ATP synthase subunit a (229 aa).

6 consecutive transmembrane segments (helical) span residues 25–45 (ADAI…SILA), 82–102 (FFPL…IGLI), 111–131 (NINT…IVGI), 142–162 (FLGP…IGHF), 181–201 (LVLM…MMLM), and 202–222 (GVLV…IYIQ).

Belongs to the ATPase A chain family. In terms of assembly, F-type ATPases have 2 components, CF(1) - the catalytic core - and CF(0) - the membrane proton channel. CF(1) has five subunits: alpha(3), beta(3), gamma(1), delta(1), epsilon(1). CF(0) has three main subunits: a(1), b(2) and c(9-12). The alpha and beta chains form an alternating ring which encloses part of the gamma chain. CF(1) is attached to CF(0) by a central stalk formed by the gamma and epsilon chains, while a peripheral stalk is formed by the delta and b chains.

Its subcellular location is the cell inner membrane. Its function is as follows. Key component of the proton channel; it plays a direct role in the translocation of protons across the membrane. The protein is ATP synthase subunit a of Geotalea daltonii (strain DSM 22248 / JCM 15807 / FRC-32) (Geobacter daltonii).